The sequence spans 438 residues: Glucosamine kinase (438 aa).

ATP contacts are provided by residues Lys133, 186–188 (AYL), and Asp193. Asp300 lines the D-glucosamine pocket. Residues Gln305, Asp317, and Asp319 each contribute to the Mg(2+) site. Residues 405-420 (QEVREYLYAVRHLPHW) carry the Substrate specificity determinant motif motif. Glu409 serves as a coordination point for D-glucosamine.

It belongs to the actinobacterial glucosamine kinase family. In terms of assembly, monomer. Requires Mg(2+) as cofactor.

It catalyses the reaction D-glucosamine + ATP = D-glucosamine 6-phosphate + ADP + H(+). Its function is as follows. Catalyzes the ATP-dependent phosphorylation of D-glucosamine (GlcN) to D-glucosamine 6-phosphate. May be involved in the phosphorylation of acquired extracellular GlcN derived from the hydrolysis of chitosan, i.e., in the incorporation of exogenous GlcN into the bacterial GlcNAc metabolism. To a lesser extent, is also active on glucose, but is unable to phosphorylate maltose, 18 other sugars and several aminoglycoside antibiotics. The chain is Glucosamine kinase from Streptacidiphilus jiangxiensis.